Here is a 392-residue protein sequence, read N- to C-terminus: Large ribosomal subunit protein uL3 (392 aa).

Belongs to the universal ribosomal protein uL3 family. Component of the large ribosomal subunit (LSU). Mature N.crassa ribosomes consist of a small (40S) and a large (60S) subunit. The 40S small subunit contains 1 molecule of ribosomal RNA (18S rRNA) and at least 32 different proteins. The large 60S subunit contains 3 rRNA molecules (26S, 5.8S and 5S rRNA) and at least 42 different proteins.

Its subcellular location is the cytoplasm. Component of the ribosome, a large ribonucleoprotein complex responsible for the synthesis of proteins in the cell. The small ribosomal subunit (SSU) binds messenger RNAs (mRNAs) and translates the encoded message by selecting cognate aminoacyl-transfer RNA (tRNA) molecules. The large subunit (LSU) contains the ribosomal catalytic site termed the peptidyl transferase center (PTC), which catalyzes the formation of peptide bonds, thereby polymerizing the amino acids delivered by tRNAs into a polypeptide chain. The nascent polypeptides leave the ribosome through a tunnel in the LSU and interact with protein factors that function in enzymatic processing, targeting, and the membrane insertion of nascent chains at the exit of the ribosomal tunnel. The polypeptide is Large ribosomal subunit protein uL3 (rpl-3) (Neurospora crassa (strain ATCC 24698 / 74-OR23-1A / CBS 708.71 / DSM 1257 / FGSC 987)).